The following is a 231-amino-acid chain: Regulatory factor X-associated protein (231 aa).

Residues Met1–Asp163 are disordered. Residues Ala50 to Asp65 show a composition bias toward acidic residues. A compositionally biased stretch (basic residues) spans Lys115–Lys138. Positions Lys123–Lys138 match the Nuclear localization signal motif. Residue Lys157 forms a Glycyl lysine isopeptide (Lys-Gly) (interchain with G-Cter in SUMO2) linkage.

As to quaternary structure, RFX consists of at least 3 different subunits; RFXAP, RFX5 and RFX-B/RFXANK; with each subunit representing a separate complementation group. RFX forms cooperative DNA binding complexes with X2BP and CBF/NF-Y. RFX associates with CIITA to form an active transcriptional complex. In terms of processing, phosphorylated.

It is found in the nucleus. In terms of biological role, part of the RFX complex that binds to the X-box of MHC II promoters. This chain is Regulatory factor X-associated protein (Rfxap), found in Mus musculus (Mouse).